A 1350-amino-acid polypeptide reads, in one-letter code: MEEPKCLQREMYKSVMTENYQCVLSLGYPIRKPEIVSMMEVGEELWSKNDSARPGQKEVEGETPKESDWAAENCKRAQMHKEVLDLDTLAAVKSEPVEEGSNSAKKSHICSHYGKLFSCYAAVVRHQRMHQLQKSHHCPHCKKSFVQRSDFIKHQRTHTGERPYQCVECQKKFTERSALVNHQRTHTGERPYTCLDCQKTFNQRSALTKHRRTHTGERPYRCSVCSKSFIQNSDLVKHLRTHTGEKPYECPLCVKRFAESSALMKHKRTHSTHRPFRCSECSRSFTHNSDLTAHMRKHTEFRNVLNLDSVVGTDPLSSQNVASSPYSCSKCRKTFKRWKSFLNHQQTHSREKPYLCSHCNKGFIQNSDLVKHFRTHTGERPYQCAECHKGFIQKSDLVKHLRTHTGEKPFKCSHCDKKFTERSALAKHQRTHTGEKPYKCSDCGKEFTQRSNLILHQRIHTGERPYKCTLCDRTFIQNSDLVKHQKVHANLPLSDPHTANSPHKCSKCDLTFSHWSTFMKHSKLHSGEKKFQCAECKKGFTQKSDLVKHIRVHTGEKPFKCLLCKKSFSQNSDLHKHWRIHTGEKPFPCYTCDKSFTERSALIKHHRTHTGERPHKCSVCQKGFIQKSALTKHSRTHTGEKPYPCTQCGKSFIQNSDLVKHQRIHTGEKPYHCTECNKRFTEGSSLVKHRRTHSGEKPYRCPQCEKTFIQSSDLVKHLVVHNGENPPAATAFHEILIRRENLTRSEPDPYPCTECGKVFHQRPALLKHLRTHKTEKRYPCNECDKSFFQTSDLVKHLRTHTGERPYHCPECNKGFIQNSDLVKHQRTHTGERPYTCSQCDKGFIQRSALTKHMRTHTGEKPYKCEQCQKCFIQNSDLVKHQRIHTGEKPYHCPDCDKRFTEGSSLIKHQRIHSRIKPYPCGVCGKSFSQSSNLLKHLKCHSEQNPPVALSSELGFVAETQTHPDPVDHIVYGDTASYISPEAAGERSFKCNDCGKCFAHRSVLIKHVRIHTGERPYKCSQCTRSFIQKSDLVKHYRTHTGERPYKCGLCERSFVEKSALSRHQRVHKNESPVLNSAMEQQQVTYWGESKDDPNSLVPQLHVIKEEESPHIVNAYSPLSILQSYFPPILEPKGTPRYSCSECGKCFTHRSVFLKHWRMHTGEQPYTCKECGKSFSQSSALVKHVRIHTGEKPYPCSTCGKSFIQKSDLAKHQRIHTGEKPYTCTVCGKKFIDRSSVVKHSRTHTGERPYKCNECTKGFVQKSDLVKHMRTHTGEKPYGCNCCDRSFSTHSASVRHQRMCNTGRPYQDEEYENSLFYSADITWKGDYAQLLQIPCGLEEPMKAIGWISEVAL.

In terms of domain architecture, KRAB spans 1–58; sequence MEEPKCLQREMYKSVMTENYQCVLSLGYPIRKPEIVSMMEVGEELWSKNDSARPGQKE. The disordered stretch occupies residues 47 to 68; the sequence is SKNDSARPGQKEVEGETPKESD. 37 C2H2-type zinc fingers span residues 108 to 130, 136 to 158, 164 to 186, 192 to 214, 220 to 242, 248 to 270, 276 to 298, 326 to 348, 354 to 376, 382 to 404, 410 to 432, 438 to 460, 466 to 488, 503 to 525, 531 to 553, 559 to 581, 587 to 609, 615 to 637, 643 to 665, 671 to 693, 699 to 721, 750 to 772, 778 to 800, 806 to 828, 834 to 856, 862 to 884, 890 to 912, 918 to 940, 988 to 1010, 1016 to 1038, 1044 to 1066, 1136 to 1158, 1164 to 1186, 1192 to 1214, 1220 to 1242, 1248 to 1270, and 1276 to 1298; these read HICS…QRMH, HHCP…QRTH, YQCV…QRTH, YTCL…RRTH, YRCS…LRTH, YECP…KRTH, FRCS…MRKH, YSCS…QQTH, YLCS…FRTH, YQCA…LRTH, FKCS…QRTH, YKCS…QRIH, YKCT…QKVH, HKCS…SKLH, FQCA…IRVH, FKCL…WRIH, FPCY…HRTH, HKCS…SRTH, YPCT…QRIH, YHCT…RRTH, YRCP…LVVH, YPCT…LRTH, YPCN…LRTH, YHCP…QRTH, YTCS…MRTH, YKCE…QRIH, YHCP…QRIH, YPCG…LKCH, FKCN…VRIH, YKCS…YRTH, YKCG…QRVH, YSCS…WRMH, YTCK…VRIH, YPCS…QRIH, YTCT…SRTH, YKCN…MRTH, and YGCN…QRMC.

Belongs to the krueppel C2H2-type zinc-finger protein family. Post-translationally, phosphorylated. Phosphorylation enhances RNA binding. As to expression, expressed in oocytes, and in specialized cell types such as neural retina cones in adults.

Its subcellular location is the cytoplasm. Functionally, binds to poly-G sequences in RNA. May function in post-translational regulation processes. This chain is Zinc finger protein Xfin, found in Xenopus laevis (African clawed frog).